The following is a 248-amino-acid chain: TPR repeat-containing protein slr0751 (248 aa).

4 TPR repeats span residues 61–94, 95–128, 129–162, and 163–196; these read PEAI…SPDS, PETH…DRYY, IPPY…DPNR, and YKAY…RPDY.

This chain is TPR repeat-containing protein slr0751, found in Synechocystis sp. (strain ATCC 27184 / PCC 6803 / Kazusa).